A 193-amino-acid polypeptide reads, in one-letter code: Protein CURVATURE THYLAKOID 1D, chloroplastic (193 aa).

The N-terminal 51 residues, 1–51 (MELCTRSTTIITHLPASFNGHGYLAGKSVDRISLPLQRNVASLVLQSRTLR), are a transit peptide targeting the chloroplast. Residues 52 to 117 (CSRKFPGETV…NDIKLDSDKT (66 aa)) lie on the Stromal side of the membrane. A helical membrane pass occupies residues 118–138 (YSILLYGSGAIVALYLTSAIV). Over 139–142 (SSLE) the chain is Lumenal. Residues 143 to 163 (AIPLFPKLMEVVGLGYTLWFT) traverse the membrane as a helical segment. Topologically, residues 164–193 (TRYLLFKRNREELKTKVSEIKKQVLGSDSE) are stromal.

It belongs to the CURT family. As to quaternary structure, homo- and heterodimers and trimers.

The protein localises to the plastid. Its subcellular location is the chloroplast thylakoid membrane. Its function is as follows. Determines thylakoid architecture by inducing membrane curvature. The polypeptide is Protein CURVATURE THYLAKOID 1D, chloroplastic (CURT1D) (Arabidopsis thaliana (Mouse-ear cress)).